The sequence spans 91 residues: Small ribosomal subunit protein uS19 (91 aa).

The protein belongs to the universal ribosomal protein uS19 family.

Its function is as follows. Protein S19 forms a complex with S13 that binds strongly to the 16S ribosomal RNA. The protein is Small ribosomal subunit protein uS19 of Marinobacter nauticus (strain ATCC 700491 / DSM 11845 / VT8) (Marinobacter aquaeolei).